A 66-amino-acid polypeptide reads, in one-letter code: Large ribosomal subunit protein bL35 (66 aa).

Over residues methionine 1–arginine 26 the composition is skewed to basic residues. 2 disordered regions span residues methionine 1–tyrosine 28 and lysine 36–glutamine 55.

It belongs to the bacterial ribosomal protein bL35 family.

The chain is Large ribosomal subunit protein bL35 from Macrococcus caseolyticus (strain JCSC5402) (Macrococcoides caseolyticum).